Here is a 253-residue protein sequence, read N- to C-terminus: Phosphonates import ATP-binding protein PhnC (253 aa).

Residues 4-247 (VRFEGVTKRF…QAVAMIYRAG (244 aa)) enclose the ABC transporter domain. 36–43 (GLSGSGKS) provides a ligand contact to ATP.

It belongs to the ABC transporter superfamily. Phosphonates importer (TC 3.A.1.9.1) family. The complex is composed of two ATP-binding proteins (PhnC), two transmembrane proteins (PhnE) and a solute-binding protein (PhnD).

Its subcellular location is the cell membrane. It carries out the reaction phosphonate(out) + ATP + H2O = phosphonate(in) + ADP + phosphate + H(+). Its function is as follows. Part of the ABC transporter complex PhnCDE involved in phosphonates import. Responsible for energy coupling to the transport system. The sequence is that of Phosphonates import ATP-binding protein PhnC from Frankia casuarinae (strain DSM 45818 / CECT 9043 / HFP020203 / CcI3).